We begin with the raw amino-acid sequence, 455 residues long: Chromosomal replication initiator protein DnaA (455 aa).

The tract at residues 1-75 is domain I, interacts with DnaA modulators; sequence MDTNNNIEKE…EILSQNKVGM (75 aa). The segment at 75–106 is domain II; that stretch reads MHLAHSVDVRIEVAPKIQINAQANINYKAIKT. Residues 107-321 form a domain III, AAA+ region region; sequence SVKDSYTFEN…GAIIKISVNA (215 aa). Residues Gly151, Gly153, Lys154, and Thr155 each contribute to the ATP site. The domain IV, binds dsDNA stretch occupies residues 322–455; it reads NLMNAPIDLN…DKKTAFNSSE (134 aa).

Belongs to the DnaA family. Oligomerizes as a right-handed, spiral filament on DNA at oriC.

It localises to the cytoplasm. Its function is as follows. Plays an essential role in the initiation and regulation of chromosomal replication. ATP-DnaA binds to the origin of replication (oriC) to initiate formation of the DNA replication initiation complex once per cell cycle. Binds the DnaA box (a 9 base pair repeat at the origin) and separates the double-stranded (ds)DNA. Forms a right-handed helical filament on oriC DNA; dsDNA binds to the exterior of the filament while single-stranded (ss)DNA is stabiized in the filament's interior. The ATP-DnaA-oriC complex binds and stabilizes one strand of the AT-rich DNA unwinding element (DUE), permitting loading of DNA polymerase. After initiation quickly degrades to an ADP-DnaA complex that is not apt for DNA replication. Binds acidic phospholipids. The protein is Chromosomal replication initiator protein DnaA of Helicobacter pylori (strain G27).